The primary structure comprises 55 residues: Spermatid nuclear transition protein 1 (55 aa).

Residues 1–42 (MSTSRKLKTHGMRRGKNRAPHKGVKRGGSKRKYRKSSLKSRK) are compositionally biased toward basic residues. The interval 1 to 55 (MSTSRKLKTHGMRRGKNRAPHKGVKRGGSKRKYRKSSLKSRKRGDDASRNYRSHL) is disordered. Phosphoserine is present on residues Ser-36, Ser-37, and Ser-40.

Belongs to the nuclear transition protein 1 family. As to expression, testis.

It is found in the nucleus. The protein resides in the chromosome. Functionally, plays a key role in the replacement of histones to protamine in the elongating spermatids of mammals. In condensing spermatids, loaded onto the nucleosomes, where it promotes the recruitment and processing of protamines, which are responsible for histone eviction. In Rattus norvegicus (Rat), this protein is Spermatid nuclear transition protein 1 (Tnp1).